Reading from the N-terminus, the 154-residue chain is Myoglobin (154 aa).

Positions 2-148 (GLSDGEWELV…FRNDIAAKYK (147 aa)) constitute a Globin domain. Serine 4 is modified (phosphoserine). Threonine 68 is modified (phosphothreonine). Heme b is bound at residue histidine 94.

It belongs to the globin family. As to quaternary structure, monomeric.

Its subcellular location is the cytoplasm. The protein resides in the sarcoplasm. The catalysed reaction is Fe(III)-heme b-[protein] + nitric oxide + H2O = Fe(II)-heme b-[protein] + nitrite + 2 H(+). The enzyme catalyses H2O2 + AH2 = A + 2 H2O. Its function is as follows. Monomeric heme protein which primary function is to store oxygen and facilitate its diffusion within muscle tissues. Reversibly binds oxygen through a pentacoordinated heme iron and enables its timely and efficient release as needed during periods of heightened demand. Depending on the oxidative conditions of tissues and cells, and in addition to its ability to bind oxygen, it also has a nitrite reductase activity whereby it regulates the production of bioactive nitric oxide. Under stress conditions, like hypoxia and anoxia, it also protects cells against reactive oxygen species thanks to its pseudoperoxidase activity. This is Myoglobin (MB) from Elephas maximus (Indian elephant).